The primary structure comprises 174 residues: MAINGRYFVQFRRRREGRTDYYQRQRLIVSGRNRMVVRKTNRHIIIQLIAAQMDGDYTLVHVNSRELVNFGYKGYLGNTPAAYLTGMLFAVRAQKAGYEGGIADIGLQVASTGARVFAAIKGAVDAGFDVPVGEAILPDDDRCNGAHIAEYDERFAGLVENVEATKDAIMKELE.

Belongs to the universal ribosomal protein uL18 family. In terms of assembly, part of the 50S ribosomal subunit. Contacts the 5S and 23S rRNAs.

Functionally, this is one of the proteins that bind and probably mediate the attachment of the 5S RNA into the large ribosomal subunit, where it forms part of the central protuberance. The polypeptide is Large ribosomal subunit protein uL18 (Methanocorpusculum labreanum (strain ATCC 43576 / DSM 4855 / Z)).